We begin with the raw amino-acid sequence, 67 residues long: UPF0337 protein SP_1805 (67 aa).

The tract at residues 1–30 is disordered; it reads MSVEEKLNQAKGSIKEGVGKAIGDEKMEKE.

It belongs to the UPF0337 (CsbD) family.

This chain is UPF0337 protein SP_1805, found in Streptococcus pneumoniae serotype 4 (strain ATCC BAA-334 / TIGR4).